The chain runs to 474 residues: Glutamate--tRNA ligase (474 aa).

Positions 9–19 (PSPTGYLHVGG) match the 'HIGH' region motif. Positions 240-244 (KLSKR) match the 'KMSKS' region motif. Residue lysine 243 coordinates ATP.

This sequence belongs to the class-I aminoacyl-tRNA synthetase family. Glutamate--tRNA ligase type 1 subfamily. As to quaternary structure, monomer.

It localises to the cytoplasm. It catalyses the reaction tRNA(Glu) + L-glutamate + ATP = L-glutamyl-tRNA(Glu) + AMP + diphosphate. In terms of biological role, catalyzes the attachment of glutamate to tRNA(Glu) in a two-step reaction: glutamate is first activated by ATP to form Glu-AMP and then transferred to the acceptor end of tRNA(Glu). The chain is Glutamate--tRNA ligase from Aliivibrio fischeri (strain ATCC 700601 / ES114) (Vibrio fischeri).